A 244-amino-acid polypeptide reads, in one-letter code: Nonsense-mediated decay protein 4 (244 aa).

The protein localises to the cytoplasm. Its function is as follows. Involved in nonsense-mediated decay of mRNAs containing premature stop codons. The polypeptide is Nonsense-mediated decay protein 4 (NMD4) (Kluyveromyces lactis (strain ATCC 8585 / CBS 2359 / DSM 70799 / NBRC 1267 / NRRL Y-1140 / WM37) (Yeast)).